We begin with the raw amino-acid sequence, 876 residues long: AP-1 complex subunit gamma-1 (876 aa).

HEAT repeat units lie at residues 97 to 135 (DERQ…ICSA), 136 to 173 (EMAR…KVPD), 248 to 284 (FLHI…KTES), 308 to 345 (SLRV…FDDQ), 346 to 382 (AVQR…ENNV), 384 to 417 (QLTK…KFSP), 418 to 454 (EKLW…NASE), 506 to 545 (VTES…RFPS), and 560 to 599 (SLLL…ATFN). In terms of domain architecture, GAE spans 756–873 (PAYAPIVAYE…LEEGQVSNFP (118 aa)).

It belongs to the adaptor complexes large subunit family. Adaptor protein complex 1 (AP-1) is a heterotetramer composed of two large adaptins (gamma-type subunit and beta-type subunit), a medium adaptin (mu-type subunit) and a small adaptin (sigma-type subunit). Binds to EPSIN1. Interacts with DRP2A/ADL6 (via C-terminus).

The protein resides in the golgi apparatus. The protein localises to the cytoplasmic vesicle. It localises to the clathrin-coated vesicle membrane. In terms of biological role, subunit of clathrin-associated adaptor protein complex 1 that plays a role in protein sorting at the trans-Golgi network and early endosomes (TGN/EE). The AP complexes mediate both the recruitment of clathrin to membranes and the recognition of sorting signals within the cytosolic tails of transmembrane cargo molecules. In Arabidopsis thaliana (Mouse-ear cress), this protein is AP-1 complex subunit gamma-1 (GAMMA-ADR).